We begin with the raw amino-acid sequence, 285 residues long: Nucleotide-binding protein Pnap_0906 (285 aa).

8–15 (GMSGSGKS) provides a ligand contact to ATP. Residue 57 to 60 (DVRS) participates in GTP binding.

It belongs to the RapZ-like family.

Displays ATPase and GTPase activities. The protein is Nucleotide-binding protein Pnap_0906 of Polaromonas naphthalenivorans (strain CJ2).